The primary structure comprises 442 residues: tRNA modification GTPase MnmE (442 aa).

(6S)-5-formyl-5,6,7,8-tetrahydrofolate contacts are provided by Arg-24, Glu-82, and Lys-120. The region spanning 217–367 (GLHIVITGEP…LISLIKKKAE (151 aa)) is the TrmE-type G domain. GTP contacts are provided by residues 227 to 232 (NVGKST), 246 to 252 (SEYAGTT), and 271 to 274 (DTAG). Residue Ser-231 coordinates Mg(2+). K(+) is bound at residue Ser-246. Thr-252 serves as a coordination point for Mg(2+). Lys-442 contributes to the (6S)-5-formyl-5,6,7,8-tetrahydrofolate binding site.

The protein belongs to the TRAFAC class TrmE-Era-EngA-EngB-Septin-like GTPase superfamily. TrmE GTPase family. In terms of assembly, homodimer. Heterotetramer of two MnmE and two MnmG subunits. K(+) serves as cofactor.

It is found in the cytoplasm. Exhibits a very high intrinsic GTPase hydrolysis rate. Involved in the addition of a carboxymethylaminomethyl (cmnm) group at the wobble position (U34) of certain tRNAs, forming tRNA-cmnm(5)s(2)U34. The protein is tRNA modification GTPase MnmE of Wolbachia pipientis subsp. Culex pipiens (strain wPip).